The chain runs to 104 residues: Transcription factor S (104 aa).

Zn(2+) contacts are provided by Cys4, Cys7, Cys20, Cys22, Cys65, Cys68, Cys93, and Cys96. The C4-type zinc finger occupies 4-22 (CPKCGAVMFPSEGKFKCQC). A TFIIS-type zinc finger spans residues 61–101 (TRVECPKCGNMEAFWWLQQTRRADESETRFFRCTRCKHTWR).

The protein belongs to the archaeal RpoM/eukaryotic RPA12/RPB9/RPC11 RNA polymerase family.

In terms of biological role, induces RNA cleavage activity in the RNA polymerase. In its presence, the cleavage activity of the RNA polymerase truncates the RNA back to position +15 in a stepwise manner by releasing mainly dinucleotides from the 3'-end of the nascent RNA. The truncated RNAs are able to continue elongation. Involved in transcriptional proofreading and fidelity. Misincorporation of nucleotides during elongation of transcription leads to arrested elongation complexes which are rescued by TFS-promoted removal of a dinucleotide from the 3'-end. TFS is able to induce a cleavage resynthesis cycle in stalled elongation complexes (resulting from the next missing nucleotide or a reduced incorporation rate of a wrong nucleotide) preventing misincorporation and enabling proofreading in a post-incorporation manner. Pausing of elongation complexes is the main determinant of TFS-induced RNA cleavage. The polypeptide is Transcription factor S (Methanothermobacter thermautotrophicus (strain ATCC 29096 / DSM 1053 / JCM 10044 / NBRC 100330 / Delta H) (Methanobacterium thermoautotrophicum)).